Reading from the N-terminus, the 112-residue chain is Gastrula zinc finger protein XlCGF9.1 (112 aa).

C2H2-type zinc fingers lie at residues 6–28, 34–56, 62–84, and 90–112; these read FICS…MKIH, FCCP…ERTH, FTCP…RIIH, and YSCP…FKIH.

The protein belongs to the krueppel C2H2-type zinc-finger protein family.

The protein resides in the nucleus. In terms of biological role, may be involved in transcriptional regulation. The polypeptide is Gastrula zinc finger protein XlCGF9.1 (Xenopus laevis (African clawed frog)).